Here is a 62-residue protein sequence, read N- to C-terminus: Sperm protamine P1 (62 aa).

The disordered stretch occupies residues 1 to 62 (MARYRHSRSR…RYSRRRRRRY (62 aa)).

The protein belongs to the protamine P1 family. In terms of tissue distribution, testis.

It is found in the nucleus. The protein localises to the chromosome. In terms of biological role, protamines substitute for histones in the chromatin of sperm during the haploid phase of spermatogenesis. They compact sperm DNA into a highly condensed, stable and inactive complex. The polypeptide is Sperm protamine P1 (PRM1) (Lagostrophus fasciatus (Banded hare-wallaby)).